The chain runs to 335 residues: MKMIGFEKPFKLEEGNLFKVYEQRKPTPENDDILVKVNSISVNPVDTKQRQMKVTQAPRVLGFDAIGTVEAIGPDVTLFSPGDVVFYAGSPNRQGSNATYQLVSEAIVAKAPHNISANEAVSLPLTGITAYETFFDTFKISHNPSENVGKSVLIINGAGGVGSIATQIAKRYGLTVITTASRQETTEWCEKMGADIVLNHKEDLVRQFKEKEIPLVDYIFCTYNTDLYYNTMIELIKPLGHITTIVAFNEDQDLNALKLKSITFTHEFMFARPIHRTPDMIKQHEYLEDITKNIELGHYQPTTTQVFEGLSPENLYQAHQLLEKQSMIGKLVINI.

This sequence belongs to the zinc-containing alcohol dehydrogenase family. Quinone oxidoreductase subfamily.

The protein is Zinc-type alcohol dehydrogenase-like protein SAV2186 of Staphylococcus aureus (strain Mu50 / ATCC 700699).